Here is a 124-residue protein sequence, read N- to C-terminus: Large ribosomal subunit protein bL12 (124 aa).

It belongs to the bacterial ribosomal protein bL12 family. Homodimer. Part of the ribosomal stalk of the 50S ribosomal subunit. Forms a multimeric L10(L12)X complex, where L10 forms an elongated spine to which 2 to 4 L12 dimers bind in a sequential fashion. Binds GTP-bound translation factors.

In terms of biological role, forms part of the ribosomal stalk which helps the ribosome interact with GTP-bound translation factors. Is thus essential for accurate translation. The polypeptide is Large ribosomal subunit protein bL12 (Nautilia profundicola (strain ATCC BAA-1463 / DSM 18972 / AmH)).